The chain runs to 1663 residues: Complement C3 (1663 aa).

An N-terminal signal peptide occupies residues 1 to 24 (MGPASGSQLLVLLLLLASSPLALG). Ser-40 carries the post-translational modification Phosphoserine. 13 disulfides stabilise this stretch: Cys-559–Cys-816, Cys-626–Cys-661, Cys-693–Cys-720, Cys-694–Cys-727, Cys-707–Cys-728, Cys-873–Cys-1513, Cys-1101–Cys-1158, Cys-1358–Cys-1489, Cys-1389–Cys-1458, Cys-1506–Cys-1511, Cys-1518–Cys-1590, Cys-1537–Cys-1661, and Cys-1637–Cys-1646. Ser-671 carries the phosphoserine modification. An Anaphylatoxin-like domain is found at 693 to 728 (CCEDGMRDIPMRYSCQRRARLITQGENCIKAFIDCC). N-linked (GlcNAc...) asparagine glycosylation is present at Asn-939. Ser-968 is subject to Phosphoserine. Positions 1010-1013 (CGEQ) form a cross-link, isoglutamyl cysteine thioester (Cys-Gln). At Ser-1321 the chain carries Phosphoserine. The NTR domain occupies 1518 to 1661 (CFMQQSQEKI…FTESMVVYGC (144 aa)). The residue at position 1573 (Ser-1573) is a Phosphoserine. Residue Asn-1617 is glycosylated (N-linked (GlcNAc...) asparagine). An interaction with CFP/properdin region spans residues 1634–1659 (AEECQDQKYQKQCEELGAFTESMVVY).

As to quaternary structure, in absence of complement activation, the C3 precursor is first processed by the removal of 4 Arg residues, forming two chains, beta and alpha, linked by a disulfide bond. Complement C3b is composed of complement C3b and complement C3 beta chains that are associated via disulfide bonds. Non-enzymatic component of the C5 convertase, also named C4bC2bC3b, composed of the serine protease complement C2b (C2), complement C3b, as well as complement C4b (C4). Non-enzymatic component of the C5 convertase of the alternative complement pathways composed of the serine protease complement CFB and complement C3b. Interacts with CFP; interaction takes place together with CFB in the alternative complement system and allows the complex to become active. Interacts with CR1 (via Sushi 8 and Sushi 9 domains). Interacts with CFH. In terms of assembly, interacts with CFH. Interacts with CR2. As to quaternary structure, during pregnancy, C3dg exists as a complex (probably a 2:2:2 heterohexamer) with AGT and the proform of PRG2. Interacts with CR2 (via the N-terminal Sushi domains 1 and 2). C3 precursor is first processed by the removal of 4 Arg residues, forming two chains, beta and alpha, linked by a disulfide bond. During activation of the complement systems, the alpha chain is cleaved into C3a and C3b by the C3 convertase: C3b stays linked to the beta chain, while C3a is released in the plasma. The alpha chain is cleaved by the serine protease complement C2b component of the C3 convertase to generate C3a and C3b following activation by the classical, lectin and GZMK complement systems. The alpha chain is cleaved by CFB component of the C3 convertase to generate C3a and C3b following activation by the alternative complement system. Post-translationally, C3a is further processed by carboxypeptidases to release the C-terminal arginine residue generating the acylation stimulating protein (ASP). Levels of ASP are increased in adipocytes in the postprandial period and by insulin and dietary chylomicrons. In terms of processing, complement C3b is rapidly split in two positions by factor I (CFI) and a cofactor (CFH) to form iC3b (inactivated C3b) and C3f which is released. CFI and CFH catalyze proteolytic degradation of already-deposited complement C3b. Then iC3b is slowly cleaved (possibly by CFI) to form C3c (beta chain + alpha' chain fragment 1 + alpha' chain fragment 2), C3dg and C3f. Other proteases produce other fragments such as C3d or C3g. Upon activation, the internal thioester bond reacts with carbohydrate antigens on the target surface to form amide or ester bonds, leading to covalent association with the surface of pathogens. Post-translationally, complement C3b interacts with complement C4b via a thioester linkage. In terms of processing, phosphorylated by FAM20C in the extracellular medium.

The protein resides in the secreted. It is found in the cell surface. Complement activation is inhibited by VSIG4. Functionally, precursor of non-enzymatic components of the classical, alternative, lectin and GZMK complement pathways, which consist in a cascade of proteins that leads to phagocytosis and breakdown of pathogens and signaling that strengthens the adaptive immune system. In terms of biological role, non-enzymatic component of C5 convertase. Generated following cleavage by C3 convertase, it covalently attaches to the surface of pathogens, where it acts as an opsonin that marks the surface of antigens for removal. Complement C3b binds covalently via its reactive thioester, to cell surface carbohydrates or immune aggregates. Together with complement C4b, it then recruits the serine protease complement C2b to form the C5 convertase, which cleaves and activate C5, the next component of the complement pathways. In the alternative complement pathway, recruits the serine protease CFB to form the C5 convertase that cleaves and activates C5. Its function is as follows. Mediator of local inflammatory process released following cleavage by C3 convertase. Acts by binding to its receptor, C3AR1, activating G protein-coupled receptor signaling, promoting the phosphorylation, ARRB2-mediated internalization and endocytosis of C3AR1. C3a anaphylatoxin stimulates the activation of immune cells such as mast cells and basophilic leukocytes to release inflammation agents, such as cytokines, chemokines and histamine, which promote inflammation development. Also acts as potent chemoattractant for the migration of macrophages and neutrophils to the inflamed tissues, resulting in neutralization of the inflammatory triggers by multiple ways, such as phagocytosis and generation of reactive oxidants. Adipogenic hormone that stimulates triglyceride synthesis and glucose transport in adipocytes, regulating fat storage and playing a role in postprandial triglyceride clearance. Appears to stimulate triglyceride synthesis via activation of the PLC, MAPK and AKT signaling pathways. Acts by binding to its receptor, C5AR2, activating G protein-coupled receptor signaling, promoting the phosphorylation, ARRB2-mediated internalization and endocytosis of C5AR2. Functionally, acts as a chemoattractant for neutrophils in chronic inflammation. The protein is Complement C3 of Mus musculus (Mouse).